The chain runs to 193 residues: Potassium-transporting ATPase KdpC subunit (193 aa).

The helical transmembrane segment at 14 to 34 (ITFTFLVLCGLVYPLIVTGIA) threads the bilayer.

This sequence belongs to the KdpC family. The system is composed of three essential subunits: KdpA, KdpB and KdpC.

Its subcellular location is the cell membrane. Functionally, part of the high-affinity ATP-driven potassium transport (or Kdp) system, which catalyzes the hydrolysis of ATP coupled with the electrogenic transport of potassium into the cytoplasm. This subunit acts as a catalytic chaperone that increases the ATP-binding affinity of the ATP-hydrolyzing subunit KdpB by the formation of a transient KdpB/KdpC/ATP ternary complex. This Bacillus cereus (strain ATCC 14579 / DSM 31 / CCUG 7414 / JCM 2152 / NBRC 15305 / NCIMB 9373 / NCTC 2599 / NRRL B-3711) protein is Potassium-transporting ATPase KdpC subunit.